The sequence spans 666 residues: Phosphoenolpyruvate carboxykinase (ATP) (666 aa).

Disordered stretches follow at residues 1–68 (MATP…AHSP) and 91–132 (ASLT…HPAA). A compositionally biased stretch (polar residues) spans 48–58 (APTTPNRSAPT). The segment covering 109-123 (KGEAAAQGAPSTPRA) has biased composition (low complexity). 364–371 (GLSGTGKT) is a binding site for ATP.

This sequence belongs to the phosphoenolpyruvate carboxykinase (ATP) family.

It localises to the cytoplasm. The catalysed reaction is oxaloacetate + ATP = phosphoenolpyruvate + ADP + CO2. It participates in carbohydrate biosynthesis; gluconeogenesis. The polypeptide is Phosphoenolpyruvate carboxykinase (ATP) (Zea mays (Maize)).